The primary structure comprises 220 residues: UPF0319 protein CKO_02102 (220 aa).

An N-terminal signal peptide occupies residues 1–20 (MKTGIITMLFVLYLPVTAFA).

It belongs to the UPF0319 family.

The polypeptide is UPF0319 protein CKO_02102 (Citrobacter koseri (strain ATCC BAA-895 / CDC 4225-83 / SGSC4696)).